The primary structure comprises 335 residues: Teichoic acids export ATP-binding protein TagH (335 aa).

An ABC transporter domain is found at 26-246; sequence IKGLFMPKSQ…YDEFVKWFNK (221 aa). 60-67 contributes to the ATP binding site; sequence GINGSGKS.

This sequence belongs to the ABC transporter superfamily. Teichoic acids exporter (TC 3.A.1.104.1) family. In terms of assembly, the complex is composed of two ATP-binding proteins (TagH) and two transmembrane proteins (TagG).

The protein resides in the cell membrane. It catalyses the reaction ATP + H2O + teichoic acidSide 1 = ADP + phosphate + teichoic acidSide 2.. Part of the ABC transporter complex TagGH involved in teichoic acids export. Responsible for energy coupling to the transport system. The protein is Teichoic acids export ATP-binding protein TagH of Listeria innocua serovar 6a (strain ATCC BAA-680 / CLIP 11262).